Here is a 229-residue protein sequence, read N- to C-terminus: Large ribosomal subunit protein uL1 (229 aa).

The protein belongs to the universal ribosomal protein uL1 family. Part of the 50S ribosomal subunit.

Binds directly to 23S rRNA. The L1 stalk is quite mobile in the ribosome, and is involved in E site tRNA release. Functionally, protein L1 is also a translational repressor protein, it controls the translation of the L11 operon by binding to its mRNA. This is Large ribosomal subunit protein uL1 from Clostridium perfringens (strain ATCC 13124 / DSM 756 / JCM 1290 / NCIMB 6125 / NCTC 8237 / Type A).